A 274-amino-acid polypeptide reads, in one-letter code: NH(3)-dependent NAD(+) synthetase (274 aa).

An ATP-binding site is contributed by 46 to 53 (GISGGQDS). Residue aspartate 52 coordinates Mg(2+). Arginine 140 is a deamido-NAD(+) binding site. Threonine 160 contacts ATP. Residue glutamate 165 coordinates Mg(2+). Deamido-NAD(+) contacts are provided by lysine 173 and aspartate 180. The ATP site is built by lysine 189 and threonine 211. Residue 260–261 (HK) coordinates deamido-NAD(+).

Belongs to the NAD synthetase family. Homodimer.

It catalyses the reaction deamido-NAD(+) + NH4(+) + ATP = AMP + diphosphate + NAD(+) + H(+). Its pathway is cofactor biosynthesis; NAD(+) biosynthesis; NAD(+) from deamido-NAD(+) (ammonia route): step 1/1. Functionally, catalyzes the ATP-dependent amidation of deamido-NAD to form NAD. Uses ammonia as a nitrogen source. This chain is NH(3)-dependent NAD(+) synthetase, found in Streptococcus equi subsp. equi (strain 4047).